The primary structure comprises 334 residues: Malate dehydrogenase, cytoplasmic (334 aa).

Ser2 carries the post-translational modification N-acetylserine. NAD(+) is bound by residues 11 to 17 and Asp42; that span reads GAAGQIA. The substrate site is built by Arg92 and Arg98. Asn105 contributes to the NAD(+) binding site. Position 110 is an N6-succinyllysine (Lys110). Gln112 is a binding site for NAD(+). Lys118 and Lys121 each carry N6-acetyllysine. 129 to 131 is a binding site for NAD(+); that stretch reads VGN. Substrate-binding residues include Asn131 and Arg162. His187 acts as the Proton acceptor in catalysis. Lys214 is modified (N6-succinyllysine). Position 217 is a phosphoserine (Ser217). Arg230 bears the Omega-N-methylarginine mark. Position 241 is a phosphoserine (Ser241). N6-acetyllysine; alternate is present on Lys298. Lys298 bears the N6-succinyllysine; alternate mark. Position 309 is a phosphoserine (Ser309). Lys318 is modified (N6-succinyllysine). 2 positions are modified to phosphoserine: Ser332 and Ser333.

Belongs to the LDH/MDH superfamily. MDH type 2 family. In terms of assembly, homodimer. In terms of processing, ISGylated. Post-translationally, acetylation at Lys-118 dramatically enhances enzymatic activity and promotes adipogenic differentiation.

It is found in the cytoplasm. Its subcellular location is the cytosol. The enzyme catalyses (S)-malate + NAD(+) = oxaloacetate + NADH + H(+). It catalyses the reaction (2R)-2-hydroxy-3-(4-hydroxyphenyl)propanoate + NAD(+) = 3-(4-hydroxyphenyl)pyruvate + NADH + H(+). It carries out the reaction (S)-2-hydroxyglutarate + NAD(+) = 2-oxoglutarate + NADH + H(+). Its function is as follows. Catalyzes the reduction of aromatic alpha-keto acids in the presence of NADH. Plays essential roles in the malate-aspartate shuttle and the tricarboxylic acid cycle, important in mitochondrial NADH supply for oxidative phosphorylation. Catalyzes the reduction of 2-oxoglutarate to 2-hydroxyglutarate, leading to elevated reactive oxygen species (ROS). This is Malate dehydrogenase, cytoplasmic (MDH1) from Felis catus (Cat).